The chain runs to 217 residues: MSQDLEQKLWSIASGIPFVSDYFLQASPARKLKKENLFSKVFETYFLELGSGWGEVAIAMALQRRNTGFVLMEKKFDRIRHTIREIEKHSLDNVKILCVNFNWFLADVFEENLFSEILLNFPDPWPKKRHHKKRTINSKFIESLRVLLPEKGKFSFATDYGPYARKTIRLFRDSEIFKPETMEFRLERKEIPVSHFERKKRKEGKRIYYIDQILIRK.

S-adenosyl-L-methionine is bound by residues Glu48, Glu73, Asn100, and Asp123. Residue Asp123 is part of the active site. Residues Lys127 and Asp159 each contribute to the substrate site.

It belongs to the class I-like SAM-binding methyltransferase superfamily. TrmB family.

It catalyses the reaction guanosine(46) in tRNA + S-adenosyl-L-methionine = N(7)-methylguanosine(46) in tRNA + S-adenosyl-L-homocysteine. Its pathway is tRNA modification; N(7)-methylguanine-tRNA biosynthesis. Its function is as follows. Catalyzes the formation of N(7)-methylguanine at position 46 (m7G46) in tRNA. This is tRNA (guanine-N(7)-)-methyltransferase from Leptospira borgpetersenii serovar Hardjo-bovis (strain JB197).